The chain runs to 592 residues: Aspartate--tRNA(Asp/Asn) ligase (592 aa).

L-aspartate is bound at residue glutamate 171. The segment at 195–198 is aspartate; it reads QLFK. Residue arginine 217 participates in L-aspartate binding. Residues 217–219 and glutamine 226 each bind ATP; that span reads RDE. Histidine 447 contacts L-aspartate. Glutamate 481 contributes to the ATP binding site. Residue arginine 488 participates in L-aspartate binding. Position 533–536 (533–536) interacts with ATP; the sequence is GLDR.

It belongs to the class-II aminoacyl-tRNA synthetase family. Type 1 subfamily. In terms of assembly, homodimer.

The protein resides in the cytoplasm. The enzyme catalyses tRNA(Asx) + L-aspartate + ATP = L-aspartyl-tRNA(Asx) + AMP + diphosphate. In terms of biological role, aspartyl-tRNA synthetase with relaxed tRNA specificity since it is able to aspartylate not only its cognate tRNA(Asp) but also tRNA(Asn). Reaction proceeds in two steps: L-aspartate is first activated by ATP to form Asp-AMP and then transferred to the acceptor end of tRNA(Asp/Asn). This chain is Aspartate--tRNA(Asp/Asn) ligase, found in Psychromonas ingrahamii (strain DSM 17664 / CCUG 51855 / 37).